Consider the following 450-residue polypeptide: MEAVIKDLIRDQGVRGEGGSTAGLSATPPASLPGSLTNVKALQKSPGPQRERKSSSSSEDRNRMKTLGRRDSSDDWEIPDGQITVGQRIGSGSFGTVYKGKWHGDVAVKMLNVTAPTPQQLQAFKNEVGVLRKTRHVNILLFMGYSTKPQLAIVTQWCEGSSLYHHLHIIETKFEMIKLIDIARQTAQGMDYLHAKSIIHRDLKSNNIFLHEDLTVKIGDFGLATVKSRWSGSHQFEQLSGSILWMAPEVIRMQDKNPYSFQSDVYAFGIVLYELMTGQLPYSNINNRDQIIFMVGRGYLSPDLSKVRSNCPKAMKRLMAECLKKKRDERPLFPQILASIELLARSLPKIHRSASEPSLNRAGFQTEDFSLYACASPKTPIQAGGIGEWAVHLLKGLLLGLVVILLLVVCLPCLLQCVSSSIRKMIDNSLGYREEYKKLQEAYKQPERRA.

2 stretches are compositionally biased toward basic and acidic residues: residues 1–14 (MEAV…DQGV) and 49–73 (QRER…RDSS). The interval 1-80 (MEAVIKDLIR…DSSDDWEIPD (80 aa)) is disordered. The Protein kinase domain maps to 83-343 (ITVGQRIGSG…PQILASIELL (261 aa)). Residues 89–97 (IGSGSFGTV) and Lys-109 each bind ATP. The Proton acceptor role is filled by Asp-202.

This sequence belongs to the protein kinase superfamily. TKL Ser/Thr protein kinase family. RAF subfamily.

The catalysed reaction is L-seryl-[protein] + ATP = O-phospho-L-seryl-[protein] + ADP + H(+). It catalyses the reaction L-threonyl-[protein] + ATP = O-phospho-L-threonyl-[protein] + ADP + H(+). The polypeptide is Serine/threonine-protein kinase-transforming protein Rmil (V-RMIL) (Avian rous-associated virus type 1).